Reading from the N-terminus, the 377-residue chain is Chaperone protein DnaJ (377 aa).

A J domain is found at 5–70 (DYYELLGLQK…EKKAKYDQFG (66 aa)). Residues 137–219 (GVEKEISVTR…CRGKGSVRKT (83 aa)) form a CR-type zinc finger. Zn(2+)-binding residues include Cys150, Cys153, Cys167, Cys170, Cys193, Cys196, Cys207, and Cys210. CXXCXGXG motif repeat units follow at residues 150-157 (CEHCHGSG), 167-174 (CPTCSGSG), 193-200 (CDTCRGTG), and 207-214 (CSECRGKG).

The protein belongs to the DnaJ family. Homodimer. The cofactor is Zn(2+).

The protein localises to the cytoplasm. Its function is as follows. Participates actively in the response to hyperosmotic and heat shock by preventing the aggregation of stress-denatured proteins and by disaggregating proteins, also in an autonomous, DnaK-independent fashion. Unfolded proteins bind initially to DnaJ; upon interaction with the DnaJ-bound protein, DnaK hydrolyzes its bound ATP, resulting in the formation of a stable complex. GrpE releases ADP from DnaK; ATP binding to DnaK triggers the release of the substrate protein, thus completing the reaction cycle. Several rounds of ATP-dependent interactions between DnaJ, DnaK and GrpE are required for fully efficient folding. Also involved, together with DnaK and GrpE, in the DNA replication of plasmids through activation of initiation proteins. This chain is Chaperone protein DnaJ, found in Clostridium beijerinckii (strain ATCC 51743 / NCIMB 8052) (Clostridium acetobutylicum).